A 611-amino-acid chain; its full sequence is Protein Spindly (611 aa).

Residues 1-288 (MEESETVLKL…QFQSLQKQHA (288 aa)) are a coiled coil. Over residues 499–511 (LKEDSSLSTKEQD) the composition is skewed to basic and acidic residues. The interval 499–611 (LKEDSSLSTK…PAATTQCPQQ (113 aa)) is disordered. Residues 549–567 (RNTNNCSVTSTSPRSASEE) show a composition bias toward polar residues. Residues 570 to 583 (SESKRFDEEQEKRK) are compositionally biased toward basic and acidic residues.

The protein belongs to the Spindly family.

Its subcellular location is the chromosome. The protein localises to the centromere. The protein resides in the kinetochore. In terms of biological role, required for the localization of dynein and dynactin to the mitotic kintochore. Dynein is believed to control the initial lateral interaction between the kinetochore and spindle microtubules and to facilitate the subsequent formation of end-on kinetochore-microtubule attachments mediated by the NDC80 complex. May act as an adapter protein linking the dynein motor complex to various cargos. This is Protein Spindly (spdl1) from Xenopus tropicalis (Western clawed frog).